The primary structure comprises 345 residues: MVKVIYKFAVFAAVNFFLMSSIVLYFNNEFLMFADRCTKDIIPSEELRYLRQVLNDSIPSKDEPLPTLKLDSLNDISGEPVIPKIIHQTWKTTEVPEGWKGAQQSCIDLHPDYEYILWTDEMSRNFIADNYPWFLPYFDAYPFNVQRADVIRYFVLYHYGGNYIDLDDGCRQRLDSLLYYPVWVRRTDPVGVSNDVMGSVPHHPYFELIIQNLEKNAKSYWLPYLTIMLSTGPLSISFLWEKYKRQLPNPPAFYDHIRVLLERDYKFSNDSYFTFYEGSSWHNNDAGIILWANRHLAYVIVAGFCLYFILSYMFFSKLLDSRYVQRFVTSKRKQPTLPLALQEDV.

The helical transmembrane segment at 4-24 (VIYKFAVFAAVNFFLMSSIVL) threads the bilayer. Asn-55 carries N-linked (GlcNAc...) asparagine glycosylation. The helical transmembrane segment at 220-240 (YWLPYLTIMLSTGPLSISFLW) threads the bilayer. An N-linked (GlcNAc...) asparagine glycan is attached at Asn-269. Residues 296-316 (LAYVIVAGFCLYFILSYMFFS) form a helical membrane-spanning segment.

The protein belongs to the glycosyltransferase 32 family.

Its subcellular location is the golgi apparatus. It is found in the cis-Golgi network membrane. The protein resides in the trans-Golgi network membrane. Its function is as follows. With imt1 and imt3, is required for the synthesis of mannosyl phosphorylinositol ceramide (MIPC). Catalyzes the addition of mannosyl to phosphorylinositol ceramide (IPC). MIPC is essential for cell morphology, cell-surface distribution of ergosterol, localization for plasma-membrane transporters, and lipid-raft-mediated endocytosis of plasma membrane proteins to the vacuole. The protein is Inositol phosphoceramide mannosyltransferase 2 of Schizosaccharomyces pombe (strain 972 / ATCC 24843) (Fission yeast).